Reading from the N-terminus, the 196-residue chain is Peroxynitrite isomerase (196 aa).

The interval 1 to 29 (MSDENPLQPPWLNAPPVDPYPYEESHDLR) is disordered. The segment covering 7 to 19 (LQPPWLNAPPVDP) has biased composition (pro residues). The GXWXGXG signature appears at 46–52 (GVWRGRG). Residue histidine 186 coordinates heme b.

This sequence belongs to the nitrobindin family. In terms of assembly, homodimer. Heme b is required as a cofactor.

The enzyme catalyses peroxynitrite = nitrate. It participates in nitrogen metabolism. Heme-binding protein able to scavenge peroxynitrite and to protect free L-tyrosine against peroxynitrite-mediated nitration, by acting as a peroxynitrite isomerase that converts peroxynitrite to nitrate. Therefore, this protein likely plays a role in peroxynitrite sensing and in the detoxification of reactive nitrogen and oxygen species (RNS and ROS, respectively). Is able to bind nitric oxide (NO) in vitro, but may act as a sensor of peroxynitrite levels in vivo. This Salinispora arenicola (strain CNS-205) protein is Peroxynitrite isomerase.